We begin with the raw amino-acid sequence, 157 residues long: Myosin regulatory light chain, striated adductor muscle (157 aa).

EF-hand domains are found at residues 16–51 and 85–120; these read KQIQ…LGRA and DSEE…MGDN. Ca(2+) is bound by residues D29, D31, D33, and D40.

In terms of biological role, in molluscan muscle, calcium regulation is associated with myosin rather than with actin. Muscle myosin contains two types of light chains: the catalytic light chain, essential for ATPase activity, and the regulatory light chain, a calcium-binding protein responsible for Ca(2+) dependent binding and Ca(2+) dependent Mg-ATPase activity. The sequence is that of Myosin regulatory light chain, striated adductor muscle from Argopecten irradians (Bay scallop).